The sequence spans 321 residues: MSSTSSSQMVQLVADKHVRYILMAEKKKESFESVVMDHLRMNGAYWGLTTLDLLDKLGCVSEEEVISWLMTCQHESGGFAGNTGHDPHILYTLSAVQILALFDKINILDIGKVSSYVAKLQNEDGSFSGDMWGEIDTRFSYIAICCLSILKCLDKINVEKAVKYIVSCKNLDGGFGCTPGAESHAGQIFCCVGALAITGSLHHVDKDSLGWWLCERQLKAGGLNGRPEKLADVCYSWWVLSSLIMIDRVHWIDKAKLVKFILDCQDLDNGGISDRPEDAVDIFHTYFGVAGLSLLEYPGVKVIDPAYALPVDVVNRIIFTK.

Ser2 is modified (N-acetylserine). 6 PFTB repeats span residues 14 to 55 (ADKH…DLLD), 62 to 103 (EEEV…ALFD), 110 to 151 (IGKV…SILK), 158 to 199 (VEKA…AITG), 206 to 247 (KDSL…IMID), and 254 to 296 (KAKL…SLLE). Residues 184 to 186 (HAG) and 226 to 229 (RPEK) contribute to the geranylgeranyl diphosphate site. Asp232 and Cys234 together coordinate Zn(2+). Residue 235-238 (YSWW) participates in geranylgeranyl diphosphate binding. His284 is a binding site for Zn(2+).

The protein belongs to the protein prenyltransferase subunit beta family. In terms of assembly, heterotrimer composed of the alpha subunit RGTA, the beta subunit RGTB and REP; within this trimer, RGTA and RGTB form the catalytic component, while REP mediates peptide substrate binding. It depends on Zn(2+) as a cofactor. Requires Mg(2+) as cofactor.

It catalyses the reaction geranylgeranyl diphosphate + L-cysteinyl-[protein] = S-geranylgeranyl-L-cysteinyl-[protein] + diphosphate. The enzymatic reaction requires the aid of the Rab escort protein REP. Its function is as follows. Catalyzes the transfer of a geranylgeranyl moiety from geranylgeranyl diphosphate to both cysteines of Rab proteins with the C-terminal sequence -CCXX, CXXX, -XCCX and -XCXC, such as RABA1A, RABA2A, RABF2A and RABG2. Involved in the geranylgeranylation of RABA2A. In vitro, can prenylate PGGTI targets with the C-terminal sequence Cys-aliphatic-aliphatic-X (CaaX) with leucine in the terminal position. Substrates with the C-terminal sequence -CSIL such as ARAC11/ROP1 or GG2/AGG2 are prenylated independently of REP and when the beta subunit is associated with the alpha subunit RGTA1. In terms of biological role, required for male fertility and root tip growth. This is Geranylgeranyl transferase type-2 subunit beta 1 from Arabidopsis thaliana (Mouse-ear cress).